Here is a 324-residue protein sequence, read N- to C-terminus: Olfactory receptor 52N5 (324 aa).

Over 1–33 (MPLFNSLCWFPTIHVTPPSFILNGIPGLERVHV) the chain is Extracellular. The chain crosses the membrane as a helical span at residues 34–54 (WISLPLCTMYIIFLVGNLGLV). Topologically, residues 55-62 (YLIYYEES) are cytoplasmic. The chain crosses the membrane as a helical span at residues 63–84 (LHHPMYFFFGHALSLIDLLTCT). The Extracellular segment spans residues 85–108 (TTLPNALCIFWFSLKEINFNACLA). Residues Cys106 and Cys198 are joined by a disulfide bond. A helical membrane pass occupies residues 109 to 129 (QMFFVHGFTGVESGVLMLMAL). Residues 130 to 148 (DRYVAICYPLRYATTLTNP) are Cytoplasmic-facing. The chain crosses the membrane as a helical span at residues 149–169 (IIAKAELATFLRGVLLMIPFP). Residues 170 to 205 (FLVKRLPFCQSNIISHTYCDHMSVVKLSCASIKVNV) lie on the Extracellular side of the membrane. A helical membrane pass occupies residues 206–226 (IYGLMVALLIGVFDICCISLS). Topologically, residues 227–246 (YTLILKAAISLSSSDARQKA) are cytoplasmic. The chain crosses the membrane as a helical span at residues 247–267 (FSTCTAHISAIIITYVPAFFT). Residues 268 to 283 (FFAHRFGGHTIPPSLH) lie on the Extracellular side of the membrane. A helical membrane pass occupies residues 284 to 304 (IIVANLYLLLPPTLNPIVYGV). The Cytoplasmic portion of the chain corresponds to 305 to 324 (KTKQIRKSVIKFFQGDKGAG).

It belongs to the G-protein coupled receptor 1 family.

It is found in the cell membrane. Its function is as follows. Odorant receptor. The sequence is that of Olfactory receptor 52N5 (OR52N5) from Homo sapiens (Human).